Reading from the N-terminus, the 261-residue chain is Type III pantothenate kinase (261 aa).

6-13 contributes to the ATP binding site; sequence DVGNTNAK. A substrate-binding site is contributed by 108-111; that stretch reads GADR. The Proton acceptor role is filled by D110. T134 provides a ligand contact to ATP. T188 contributes to the substrate binding site.

The protein belongs to the type III pantothenate kinase family. Homodimer. NH4(+) serves as cofactor. The cofactor is K(+).

Its subcellular location is the cytoplasm. It carries out the reaction (R)-pantothenate + ATP = (R)-4'-phosphopantothenate + ADP + H(+). It functions in the pathway cofactor biosynthesis; coenzyme A biosynthesis; CoA from (R)-pantothenate: step 1/5. Catalyzes the phosphorylation of pantothenate (Pan), the first step in CoA biosynthesis. This is Type III pantothenate kinase from Sphingopyxis alaskensis (strain DSM 13593 / LMG 18877 / RB2256) (Sphingomonas alaskensis).